A 477-amino-acid chain; its full sequence is Cysteine--tRNA ligase (477 aa).

Cysteine 29 contacts Zn(2+). Positions 31–41 (PTVYNYFHVGN) match the 'HIGH' region motif. 3 residues coordinate Zn(2+): cysteine 209, histidine 234, and glutamate 238. The 'KMSKS' region signature appears at 267–271 (KMSKS). Lysine 270 is an ATP binding site.

The protein belongs to the class-I aminoacyl-tRNA synthetase family. In terms of assembly, monomer. The cofactor is Zn(2+).

It is found in the cytoplasm. It carries out the reaction tRNA(Cys) + L-cysteine + ATP = L-cysteinyl-tRNA(Cys) + AMP + diphosphate. The protein is Cysteine--tRNA ligase of Desulfitobacterium hafniense (strain DSM 10664 / DCB-2).